A 663-amino-acid chain; its full sequence is Methionine--tRNA ligase (663 aa).

The 'HIGH' region motif lies at Ala-10–His-20. The Zn(2+) site is built by Cys-142, Cys-145, Cys-154, and Cys-157. The 'KMSKS' region signature appears at Lys-323–Ser-327. Thr-326 is an ATP binding site. A tRNA-binding domain is found at Tyr-563–His-663.

Belongs to the class-I aminoacyl-tRNA synthetase family. MetG type 1 subfamily. Homodimer. Zn(2+) is required as a cofactor.

It is found in the cytoplasm. It catalyses the reaction tRNA(Met) + L-methionine + ATP = L-methionyl-tRNA(Met) + AMP + diphosphate. Is required not only for elongation of protein synthesis but also for the initiation of all mRNA translation through initiator tRNA(fMet) aminoacylation. The sequence is that of Methionine--tRNA ligase from Methanococcus maripaludis (strain C7 / ATCC BAA-1331).